Reading from the N-terminus, the 995-residue chain is Integrator complex subunit 8 (995 aa).

T18 bears the Phosphothreonine mark. The WFEF motif signature appears at 24-29 (WFEFLL). TPR repeat units lie at residues 250-288 (CQVC…LAEI), 320-356 (SQQL…TLPV), 570-603 (VYIL…VTEF), and 833-866 (HAWL…CSDF).

Belongs to the Integrator subunit 8 family. As to quaternary structure, component of the Integrator complex, composed of core subunits INTS1, INTS2, INTS3, INTS4, INTS5, INTS6, INTS7, INTS8, INTS9/RC74, INTS10, INTS11/CPSF3L, INTS12, INTS13, INTS14 and INTS15. The core complex associates with protein phosphatase 2A subunits PPP2CA and PPP2R1A, to form the Integrator-PP2A (INTAC) complex.

The protein resides in the nucleus. The protein localises to the chromosome. Component of the integrator complex, a multiprotein complex that terminates RNA polymerase II (Pol II) transcription in the promoter-proximal region of genes. The integrator complex provides a quality checkpoint during transcription elongation by driving premature transcription termination of transcripts that are unfavorably configured for transcriptional elongation: the complex terminates transcription by (1) catalyzing dephosphorylation of the C-terminal domain (CTD) of Pol II subunit POLR2A/RPB1 and SUPT5H/SPT5, (2) degrading the exiting nascent RNA transcript via endonuclease activity and (3) promoting the release of Pol II from bound DNA. The integrator complex is also involved in terminating the synthesis of non-coding Pol II transcripts, such as enhancer RNAs (eRNAs), small nuclear RNAs (snRNAs), telomerase RNAs and long non-coding RNAs (lncRNAs). Within the integrator complex, INTS8 is required for the recruitment of protein phosphatase 2A (PP2A) to transcription pause-release checkpoint. The sequence is that of Integrator complex subunit 8 (Ints8) from Mus musculus (Mouse).